Here is a 317-residue protein sequence, read N- to C-terminus: tRNA-dihydrouridine(20a/20b) synthase [NAD(P)+]-like (317 aa).

FMN-binding positions include 33 to 35 and Gln-87; that span reads PMV. Cys-116 acts as the Proton donor in catalysis. Residues Lys-158, His-186, 216-218, and 240-241 contribute to the FMN site; these read NGD and AR.

This sequence belongs to the Dus family. Dus4 subfamily. It depends on FMN as a cofactor.

It carries out the reaction 5,6-dihydrouridine(20a) in tRNA + NADP(+) = uridine(20a) in tRNA + NADPH + H(+). The enzyme catalyses 5,6-dihydrouridine(20a) in tRNA + NAD(+) = uridine(20a) in tRNA + NADH + H(+). The catalysed reaction is 5,6-dihydrouridine(20b) in tRNA + NAD(+) = uridine(20b) in tRNA + NADH + H(+). It catalyses the reaction 5,6-dihydrouridine(20b) in tRNA + NADP(+) = uridine(20b) in tRNA + NADPH + H(+). In terms of biological role, catalyzes the synthesis of dihydrouridine, a modified base found in the D-loop of most tRNAs. This is tRNA-dihydrouridine(20a/20b) synthase [NAD(P)+]-like (DUS4L) from Homo sapiens (Human).